We begin with the raw amino-acid sequence, 609 residues long: Membrane-bound O-acyltransferase GUP2 (609 aa).

A signal peptide spans 1–18 (MSMLRIWSCIVHFFSVQA). Over 19 to 75 (LDSRIKPDIEFKRRQRIFINSSKEENGSSSSAVTVTRNPVLSSNSPSPPLWNTWEFR) the chain is Lumenal. The chain crosses the membrane as a helical span at residues 76–96 (LYYLAFTVVVPFMIKAALATS). Residues 97–133 (SESNPNYYKFSGLLAHGWILGRKVDNSDPQYRFFRSN) are Cytoplasmic-facing. The helical transmembrane segment at 134 to 154 (FFLLAILILLQIILKKVFVKF) threads the bilayer. Residues 155 to 169 (SKIPKTKFDFACGLV) are Lumenal-facing. The chain crosses the membrane as a helical span at residues 170-190 (FVCFMYGINSVKLFTHAFIFF). Residues 191–200 (TLAHSLKRKR) are Cytoplasmic-facing. A helical membrane pass occupies residues 201–221 (LIAAFAIWSYGIFTLFINQKM). The Lumenal segment spans residues 222-324 (KNLPFNNIAI…VAEHHIQDYN (103 aa)). Residues 325-345 (FINFIAYITYAPLFLVGPIIT) traverse the membrane as a helical segment. Over 346–371 (FNDYLYQSENKLPSLTKKNIGFYALK) the chain is Cytoplasmic. Residues 372–392 (VFSSLLLMEIILHYIYVGAIA) form a helical membrane-spanning segment. Residues 393 to 406 (RTKAWNNDTPLQQA) lie on the Lumenal side of the membrane. Residues 407–427 (MIALFNLNIMYLKLLIPWRLF) traverse the membrane as a helical segment. Topologically, residues 428 to 474 (RLWAMVDGIDAPENMLRCVDNNYSTVGFWRAWHTSFNKWVIRYIYVP) are cytoplasmic. A helical transmembrane segment spans residues 475–495 (FGGSNNKILTSFAVFSFVAIW). His496 is an active-site residue. The Lumenal portion of the chain corresponds to 496 to 502 (HDIQLRV). A helical membrane pass occupies residues 503–523 (LFWGWLTVLLLLGETYITNCF). At 524 to 533 (SRYRFRSWYR) the chain is on the cytoplasmic side. A helical transmembrane segment spans residues 534–554 (FVCGIGAAINICMMMIINVYG). Over 555–575 (FCLGAEGTKLLLKGIFNNSHS) the chain is Lumenal. A helical membrane pass occupies residues 576-596 (PEFLTAVMVSLFIAVQVMFEI). Residues 597–609 (REEEKRHGINLKC) lie on the Cytoplasmic side of the membrane.

Belongs to the membrane-bound acyltransferase family.

It localises to the endoplasmic reticulum membrane. Functionally, probable membrane-bound O-acyltransferase. Together with GUP1, has an influence on the chemical composition of the yeast extracellular matrix (yECM) in yeast multicellular aggregates, such as biofilms and colonies. The protein is Membrane-bound O-acyltransferase GUP2 (GUP2) of Saccharomyces cerevisiae (strain ATCC 204508 / S288c) (Baker's yeast).